A 211-amino-acid polypeptide reads, in one-letter code: Holliday junction branch migration complex subunit RuvA (211 aa).

The interval 1-63 (MIASLRGTVI…EDSQTLYVFK (63 aa)) is domain I. A domain II region spans residues 64–142 (DADEKRAFAT…DLGEIADTGA (79 aa)). Positions 143-157 (VGAAGAVGDGGDGQA) are flexible linker. A domain III region spans residues 158-211 (VAPDVREQVLEALVGLGFTESKAGTTIEAVLSQWSAPQAPDASGLLRASLAAIK).

The protein belongs to the RuvA family. As to quaternary structure, homotetramer. Forms an RuvA(8)-RuvB(12)-Holliday junction (HJ) complex. HJ DNA is sandwiched between 2 RuvA tetramers; dsDNA enters through RuvA and exits via RuvB. An RuvB hexamer assembles on each DNA strand where it exits the tetramer. Each RuvB hexamer is contacted by two RuvA subunits (via domain III) on 2 adjacent RuvB subunits; this complex drives branch migration. In the full resolvosome a probable DNA-RuvA(4)-RuvB(12)-RuvC(2) complex forms which resolves the HJ.

Its subcellular location is the cytoplasm. Functionally, the RuvA-RuvB-RuvC complex processes Holliday junction (HJ) DNA during genetic recombination and DNA repair, while the RuvA-RuvB complex plays an important role in the rescue of blocked DNA replication forks via replication fork reversal (RFR). RuvA specifically binds to HJ cruciform DNA, conferring on it an open structure. The RuvB hexamer acts as an ATP-dependent pump, pulling dsDNA into and through the RuvAB complex. HJ branch migration allows RuvC to scan DNA until it finds its consensus sequence, where it cleaves and resolves the cruciform DNA. The chain is Holliday junction branch migration complex subunit RuvA from Corynebacterium jeikeium (strain K411).